The sequence spans 268 residues: Enoyl-[acyl-carrier-protein] reductase [NADH] 2 (268 aa).

NAD(+)-binding positions include Gly-14, 20-21 (SI), Gln-41, 65-66 (DV), and Ile-93. Residues Tyr-146 and Tyr-156 each act as proton acceptor in the active site. Residues Lys-163 and 192-196 (IRTLA) each bind NAD(+).

The protein belongs to the short-chain dehydrogenases/reductases (SDR) family. FabI subfamily.

It is found in the cell inner membrane. It catalyses the reaction a 2,3-saturated acyl-[ACP] + NAD(+) = a (2E)-enoyl-[ACP] + NADH + H(+). Its pathway is lipid metabolism; fatty acid biosynthesis. The protein is Enoyl-[acyl-carrier-protein] reductase [NADH] 2 (fabI2) of Rhizobium meliloti (strain 1021) (Ensifer meliloti).